The chain runs to 491 residues: Glycogen synthase (491 aa).

Arg20 contributes to the ADP-alpha-D-glucose binding site.

The protein belongs to the glycosyltransferase 1 family. Bacterial/plant glycogen synthase subfamily.

It carries out the reaction [(1-&gt;4)-alpha-D-glucosyl](n) + ADP-alpha-D-glucose = [(1-&gt;4)-alpha-D-glucosyl](n+1) + ADP + H(+). Its pathway is glycan biosynthesis; glycogen biosynthesis. In terms of biological role, synthesizes alpha-1,4-glucan chains using ADP-glucose. This chain is Glycogen synthase, found in Prosthecochloris aestuarii (strain DSM 271 / SK 413).